Reading from the N-terminus, the 325-residue chain is Elongation factor P--(R)-beta-lysine ligase (325 aa).

Substrate is bound at residue 76–78; it reads SPE. Residues 100–102 and Asn109 contribute to the ATP site; that span reads RNE. Substrate is bound at residue Tyr118. Residue 244–245 participates in ATP binding; sequence EL. Glu251 is a substrate binding site. An ATP-binding site is contributed by Gly300.

Belongs to the class-II aminoacyl-tRNA synthetase family. EpmA subfamily. Homodimer.

It carries out the reaction D-beta-lysine + L-lysyl-[protein] + ATP = N(6)-((3R)-3,6-diaminohexanoyl)-L-lysyl-[protein] + AMP + diphosphate + H(+). Its function is as follows. With EpmB is involved in the beta-lysylation step of the post-translational modification of translation elongation factor P (EF-P) on 'Lys-34'. Catalyzes the ATP-dependent activation of (R)-beta-lysine produced by EpmB, forming a lysyl-adenylate, from which the beta-lysyl moiety is then transferred to the epsilon-amino group of EF-P 'Lys-34'. The polypeptide is Elongation factor P--(R)-beta-lysine ligase (Salmonella arizonae (strain ATCC BAA-731 / CDC346-86 / RSK2980)).